The primary structure comprises 371 residues: Dihydroorotate dehydrogenase (quinone) (371 aa).

Residues 79-83 and Thr-103 contribute to the FMN site; that span reads AGFDK. Position 83 (Lys-83) interacts with substrate. 128 to 132 is a binding site for substrate; it reads NRMGF. The FMN site is built by Asn-156 and Asn-189. Asn-189 contributes to the substrate binding site. The active-site Nucleophile is the Ser-192. Asn-194 contributes to the substrate binding site. Residues Lys-225 and Thr-253 each coordinate FMN. A substrate-binding site is contributed by 254 to 255; that stretch reads NT. Residues Gly-279, Gly-308, and 329–330 each bind FMN; that span reads YT.

This sequence belongs to the dihydroorotate dehydrogenase family. Type 2 subfamily. As to quaternary structure, monomer. FMN is required as a cofactor.

Its subcellular location is the cell membrane. The enzyme catalyses (S)-dihydroorotate + a quinone = orotate + a quinol. It participates in pyrimidine metabolism; UMP biosynthesis via de novo pathway; orotate from (S)-dihydroorotate (quinone route): step 1/1. Its function is as follows. Catalyzes the conversion of dihydroorotate to orotate with quinone as electron acceptor. In Corynebacterium glutamicum (strain R), this protein is Dihydroorotate dehydrogenase (quinone).